Here is a 44-residue protein sequence, read N- to C-terminus: Photosystem II reaction center protein K (44 aa).

Positions 1 to 7 are excised as a propeptide; that stretch reads METLLLS. A helical transmembrane segment spans residues 23–43; that stretch reads LPIIPVFFLLLAFVWQAAIGF.

Belongs to the PsbK family. In terms of assembly, PSII is composed of 1 copy each of membrane proteins PsbA, PsbB, PsbC, PsbD, PsbE, PsbF, PsbH, PsbI, PsbJ, PsbK, PsbL, PsbM, PsbT, PsbX, PsbY, PsbZ, Psb30/Ycf12, at least 3 peripheral proteins of the oxygen-evolving complex and a large number of cofactors. It forms dimeric complexes.

It localises to the plastid. The protein resides in the chloroplast thylakoid membrane. In terms of biological role, one of the components of the core complex of photosystem II (PSII). PSII is a light-driven water:plastoquinone oxidoreductase that uses light energy to abstract electrons from H(2)O, generating O(2) and a proton gradient subsequently used for ATP formation. It consists of a core antenna complex that captures photons, and an electron transfer chain that converts photonic excitation into a charge separation. This is Photosystem II reaction center protein K from Phaeodactylum tricornutum (strain CCAP 1055/1).